Consider the following 143-residue polypeptide: Nucleoside diphosphate kinase (143 aa).

Residues K11, F59, R87, T93, R104, and N114 each coordinate ATP. The Pros-phosphohistidine intermediate role is filled by H117.

Belongs to the NDK family. Homotetramer. Mg(2+) is required as a cofactor.

It is found in the cytoplasm. The catalysed reaction is a 2'-deoxyribonucleoside 5'-diphosphate + ATP = a 2'-deoxyribonucleoside 5'-triphosphate + ADP. It carries out the reaction a ribonucleoside 5'-diphosphate + ATP = a ribonucleoside 5'-triphosphate + ADP. Functionally, major role in the synthesis of nucleoside triphosphates other than ATP. The ATP gamma phosphate is transferred to the NDP beta phosphate via a ping-pong mechanism, using a phosphorylated active-site intermediate. This is Nucleoside diphosphate kinase from Shewanella amazonensis (strain ATCC BAA-1098 / SB2B).